Consider the following 366-residue polypeptide: Inhibin alpha chain (366 aa).

An N-terminal signal peptide occupies residues 1–20 (MVSQRSLLLLLLLTLRDVDS). A propeptide spanning residues 21 to 63 (CQGPELVRELVLAKVKALFLDALGPPAMDGEGGDPGIRRLPRR) is cleaved from the precursor. A propeptide spans 64-233 (HAVGGFMHRT…APSAGERARR (170 aa)) (inhibin alpha N-terminal region). 2 N-linked (GlcNAc...) asparagine glycosylation sites follow: asparagine 147 and asparagine 269. 3 disulfides stabilise this stretch: cysteine 263-cysteine 328, cysteine 292-cysteine 363, and cysteine 296-cysteine 365.

Belongs to the TGF-beta family. Dimeric, linked by one or more disulfide bonds. Activin B is a dimer of alpha and beta-B. Inhibin A is a dimer of alpha and beta-A. Inhibin B is a dimer of alpha and beta-B. Interacts with TGFBR3L; this interaction regulates female fertility. Proteolytic processing yields a number of bioactive forms, consisting either solely of the mature alpha chain, of the most N-terminal propeptide linked through a disulfide bond to the mature alpha chain, or of the entire proprotein.

The protein localises to the secreted. Functionally, inhibins and activins inhibit and activate, respectively, the secretion of follitropin by the pituitary gland. Inhibins/activins are involved in regulating a number of diverse functions such as hypothalamic and pituitary hormone secretion, gonadal hormone secretion, germ cell development and maturation, erythroid differentiation, insulin secretion, nerve cell survival, embryonic axial development or bone growth, depending on their subunit composition. Inhibins appear to oppose the functions of activins. Its function is as follows. Inhibin A is a dimer of alpha/INHA and beta-A/INHBA that functions as a feedback regulator in the hypothalamic-pituitary-gonadal (HPG) axis. Inhibits the secretion of FSH from the anterior pituitary gland by acting on pituitary gonadotrope cells. Antagonizes activin A by binding to the proteoglycan, betaglycan, and forming a stable complex with and, thereby, sequestering type II activin receptors while excluding type I receptor. Inhibin B is a dimer of alpha and beta-B that plays a crucial role in the regulation of the reproductive system by inhibiting the secretion of follicle-stimulating hormone (FSH) from the anterior pituitary gland. Thereby, maintains reproductive homeostasis in both males and females. Acts as a more potent suppressor of FSH release than inhibin A. Functions as competitive receptor antagonist binding activin type II receptors with high affinity in the presence of the TGF-beta type III coreceptor/TGFBR3L. The polypeptide is Inhibin alpha chain (Inha) (Mus musculus (Mouse)).